The sequence spans 732 residues: Subtilisin-like protease SBT4.13 (732 aa).

Residues 1–24 (MATLAASSSLLSCLLVLFLSSVSA) form the signal peptide. The propeptide at 25–109 (VTDDKQVYIV…VFPNKKLQLQ (85 aa)) is activation peptide. Positions 31–108 (VYIVYMGSLS…SVFPNKKLQL (78 aa)) constitute an Inhibitor I9 domain. Positions 113-579 (SWDFMGLKEG…SGHVDPIAAS (467 aa)) constitute a Peptidase S8 domain. Asp-141 acts as the Charge relay system in catalysis. A glycan (N-linked (GlcNAc...) asparagine) is linked at Asn-172. His-196 acts as the Charge relay system in catalysis. Asn-219 is a glycosylation site (N-linked (GlcNAc...) asparagine). A PA domain is found at 352-436 (DYPLVYGKSA…GLLTEDFESL (85 aa)). N-linked (GlcNAc...) asparagine glycosylation occurs at Asn-458. The active-site Charge relay system is the Ser-518. N-linked (GlcNAc...) asparagine glycans are attached at residues Asn-555, Asn-600, Asn-648, and Asn-658.

It belongs to the peptidase S8 family. The C-terminal propeptide is autocleaved.

Its subcellular location is the secreted. The chain is Subtilisin-like protease SBT4.13 from Arabidopsis thaliana (Mouse-ear cress).